The chain runs to 79 residues: Sulfur carrier protein TusA (79 aa).

Cys-17 serves as the catalytic Cysteine persulfide intermediate.

It belongs to the sulfur carrier protein TusA family.

The protein resides in the cytoplasm. Sulfur carrier protein which probably makes part of a sulfur-relay system. This chain is Sulfur carrier protein TusA, found in Actinobacillus succinogenes (strain ATCC 55618 / DSM 22257 / CCUG 43843 / 130Z).